The following is a 460-amino-acid chain: MTVPYLNSNRNVASYLQSNSSQEKTLKERFSEIYPIHAQDVRQFVKEHGKTKISDVLLEQVYGGMRGIPGSVWEGSVLDPEDGIRFRGRTIADIQKDLPKAKGSSQPLPEALFWLLLTGEVPTQAQVENLSADLMSRSELPSHVVQLLDNLPKDLHPMAQFSIAVTALESESKFAKAYAQGISKQDYWSYTFEDSLDLLGKLPVIAAKIYRNVFKDGKMGEVDPNADYAKNLVNLIGSKDEDFVDLMRLYLTIHSDHEGGNVSAHTSHLVGSALSSPYLSLASGLNGLAGPLHGRANQEVLEWLFALKEEVNDDYSKDTIEKYLWDTLNSGRVIPGYGHAVLRKTDPRYMAQRKFAMDHFPDYELFKLVSSIYEVAPGVLTEHGKTKNPWPNVDAHSGVLLQYYGLKESSFYTVLFGVSRAFGILAQLITDRAIGASIERPKSYSTEKYKELVKNIESKL.

Ser21 is subject to Phosphoserine. Glycyl lysine isopeptide (Lys-Gly) (interchain with G-Cter in ubiquitin) cross-links involve residues Lys218 and Lys239. Active-site residues include His293 and His339. Glycyl lysine isopeptide (Lys-Gly) (interchain with G-Cter in ubiquitin) cross-links involve residues Lys354 and Lys385. Asp394 is an active-site residue. Positions 458–460 (SKL) match the C-terminal peroxisome targeting signal (PTS1) motif.

The protein belongs to the citrate synthase family. As to quaternary structure, interacts with F-box protein UCC1. In terms of processing, ubiquitinated by the E3 ubiquitin-protein ligase complex SCF(UCC1), which leads to its degradation by the proteasome. Ubiquitination is prevented by oxaloacetate, suggesting the existence of an oxaloacetate-dependent positive feedback loop that stabilizes CIT2.

The protein localises to the cytoplasm. The protein resides in the peroxisome. The catalysed reaction is oxaloacetate + acetyl-CoA + H2O = citrate + CoA + H(+). It participates in carbohydrate metabolism; tricarboxylic acid cycle; isocitrate from oxaloacetate: step 1/2. Peroxisomal citrate synthase involved in the citrate homeostasis. Catalyzes the condensation of acetyl coenzyme A and oxaloacetate to form citrate. Citrate synthase is the rate-limiting enzyme of the tricarboxylic acid (TCA) cycle. In Saccharomyces cerevisiae (strain ATCC 204508 / S288c) (Baker's yeast), this protein is Citrate synthase, peroxisomal.